A 621-amino-acid polypeptide reads, in one-letter code: Pentatricopeptide repeat-containing protein At3g48250, chloroplastic (621 aa).

The transit peptide at 1–67 directs the protein to the chloroplast; it reads MYRSMAILSS…SKPDSMLQLV (67 aa). PPR repeat units lie at residues 122-156, 157-194, 262-296, 297-331, 332-368, 369-403, 404-438, 439-473, 474-509, and 510-544; these read STPL…GFYL, DEDT…NAMS, STVT…GYDM, DLDT…PFKP, SIQD…GKSL, SKAV…GYEP, DNIT…GCFP, DIKT…GFDI, DSNL…NVKP, and WQST…NYPA.

This sequence belongs to the PPR family. P subfamily.

Its subcellular location is the plastid. The protein resides in the chloroplast. This is Pentatricopeptide repeat-containing protein At3g48250, chloroplastic from Arabidopsis thaliana (Mouse-ear cress).